A 203-amino-acid polypeptide reads, in one-letter code: Protein GrpE (203 aa).

The segment covering 1–20 (MSSKEQNVHEEQVSKEKEGM) has biased composition (basic and acidic residues). Residues 1-38 (MSSKEQNVHEEQVSKEKEGMESVMNESQEQVKSEDAQA) form a disordered region.

The protein belongs to the GrpE family. As to quaternary structure, homodimer.

The protein localises to the cytoplasm. Functionally, participates actively in the response to hyperosmotic and heat shock by preventing the aggregation of stress-denatured proteins, in association with DnaK and GrpE. It is the nucleotide exchange factor for DnaK and may function as a thermosensor. Unfolded proteins bind initially to DnaJ; upon interaction with the DnaJ-bound protein, DnaK hydrolyzes its bound ATP, resulting in the formation of a stable complex. GrpE releases ADP from DnaK; ATP binding to DnaK triggers the release of the substrate protein, thus completing the reaction cycle. Several rounds of ATP-dependent interactions between DnaJ, DnaK and GrpE are required for fully efficient folding. The polypeptide is Protein GrpE (Proteus mirabilis (strain HI4320)).